A 71-amino-acid polypeptide reads, in one-letter code: Protein KleB (71 aa).

Residues 9–28 constitute a DNA-binding region (H-T-H motif); the sequence is IETCCRRCGKSIRTLSHTII.

This is Protein KleB (kleB) from Escherichia coli.